Consider the following 304-residue polypeptide: Negative regulator of the PHO system (304 aa).

The Protein kinase domain maps to 7–297 (FKQLEKVGNG…AKDALNHPWF (291 aa)). ATP is bound by residues 13–21 (VGNGTYATV) and K36. Residue D133 is the Proton acceptor of the active site.

It belongs to the protein kinase superfamily. CMGC Ser/Thr protein kinase family. CDC2/CDKX subfamily. As to quaternary structure, interacts with a number of cyclins.

The catalysed reaction is L-seryl-[protein] + ATP = O-phospho-L-seryl-[protein] + ADP + H(+). It catalyses the reaction L-threonyl-[protein] + ATP = O-phospho-L-threonyl-[protein] + ADP + H(+). Functionally, when phosphate concentrations are high it phosphorylates the PHO4 transcription factor thus establishing repression. The polypeptide is Negative regulator of the PHO system (PHO85) (Kluyveromyces lactis (strain ATCC 8585 / CBS 2359 / DSM 70799 / NBRC 1267 / NRRL Y-1140 / WM37) (Yeast)).